We begin with the raw amino-acid sequence, 420 residues long: Putative T-box protein 33 (420 aa).

A DNA-binding region (T-box) is located at residues 93 to 291; the sequence is LWKELHYLSN…ANPTSRGDAK (199 aa). Residues 395–412 show a composition bias toward polar residues; sequence SPPLQPTATSPEASQNQI. The disordered stretch occupies residues 395-420; that stretch reads SPPLQPTATSPEASQNQIKLEMNQYM.

The protein resides in the nucleus. The polypeptide is Putative T-box protein 33 (tbx-33) (Caenorhabditis elegans).